Reading from the N-terminus, the 253-residue chain is REF/SRPP-like protein OsI_017815 (253 aa).

Positions 1–26 are disordered; it reads MADSGSDAPISNRPEEEVTVEKTPEM. The segment covering 13-26 has biased composition (basic and acidic residues); the sequence is RPEEEVTVEKTPEM.

Belongs to the REF/SRPP family.

This chain is REF/SRPP-like protein OsI_017815, found in Oryza sativa subsp. indica (Rice).